A 599-amino-acid polypeptide reads, in one-letter code: Elongation factor 4 (599 aa).

In terms of domain architecture, tr-type G spans 2 to 184 (KNIRNFSIIA…RLVRDIPPPQ (183 aa)). GTP contacts are provided by residues 14–19 (DHGKST) and 131–134 (NKID).

This sequence belongs to the TRAFAC class translation factor GTPase superfamily. Classic translation factor GTPase family. LepA subfamily.

It is found in the cell inner membrane. It catalyses the reaction GTP + H2O = GDP + phosphate + H(+). Functionally, required for accurate and efficient protein synthesis under certain stress conditions. May act as a fidelity factor of the translation reaction, by catalyzing a one-codon backward translocation of tRNAs on improperly translocated ribosomes. Back-translocation proceeds from a post-translocation (POST) complex to a pre-translocation (PRE) complex, thus giving elongation factor G a second chance to translocate the tRNAs correctly. Binds to ribosomes in a GTP-dependent manner. The protein is Elongation factor 4 of Salmonella agona (strain SL483).